We begin with the raw amino-acid sequence, 542 residues long: Putative selenium-binding protein (542 aa).

The protein belongs to the selenium-binding protein family.

The sequence is that of Putative selenium-binding protein from Caenorhabditis elegans.